The following is a 307-amino-acid chain: Mycothiol acetyltransferase (307 aa).

N-acetyltransferase domains follow at residues 12–157 (TRTD…PPLP) and 160–307 (VTLR…YQLG). Glu-43 is a 1D-myo-inositol 2-(L-cysteinylamino)-2-deoxy-alpha-D-glucopyranoside binding site. 87 to 89 (LAV) is an acetyl-CoA binding site. 1D-myo-inositol 2-(L-cysteinylamino)-2-deoxy-alpha-D-glucopyranoside-binding residues include Glu-187, Lys-227, and Glu-239. Acetyl-CoA is bound by residues 243–245 (LGV) and 250–256 (HGGGLGK). Residue Tyr-278 coordinates 1D-myo-inositol 2-(L-cysteinylamino)-2-deoxy-alpha-D-glucopyranoside.

The protein belongs to the acetyltransferase family. MshD subfamily. In terms of assembly, monomer.

The enzyme catalyses 1D-myo-inositol 2-(L-cysteinylamino)-2-deoxy-alpha-D-glucopyranoside + acetyl-CoA = mycothiol + CoA + H(+). Its function is as follows. Catalyzes the transfer of acetyl from acetyl-CoA to desacetylmycothiol (Cys-GlcN-Ins) to form mycothiol. This is Mycothiol acetyltransferase from Salinispora tropica (strain ATCC BAA-916 / DSM 44818 / JCM 13857 / NBRC 105044 / CNB-440).